Consider the following 570-residue polypeptide: Guanine nucleotide-binding protein alpha-3 subunit (570 aa).

Residues 10–113 (RETLRAYLSK…WIEAIKHAIE (104 aa)) enclose the PH domain. One can recognise a G-alpha domain in the interval 144–570 (PVLKLLLLGT…IISKTLEFYC (427 aa)). Residues 147–160 (KLLLLGTGESGKST) are G1 motif. GTP is bound at residue 152-159 (GTGESGKS). Ser-159 contributes to the Mg(2+) binding site. Low complexity-rich tracts occupy residues 254 to 272 (NNNS…SSSS) and 290 to 316 (NSNS…RSNS). Residues 254 to 321 (NNNSNSSSLK…NRSNSDGSSN (68 aa)) are disordered. The G2 motif stretch occupies residues 386–394 (DILKSRATT). GTP-binding positions include 388-394 (LKSRATT), 414-418 (DVAGQ), 483-486 (NKID), and Ala-544. Thr-394 serves as a coordination point for Mg(2+). The segment at 410 to 419 (FRIVDVAGQR) is G3 motif. Residues 479 to 486 (ILFLNKID) form a G4 motif region. Residues 542 to 547 (TCATDT) are G5 motif.

Belongs to the G-alpha family. G proteins are composed of 3 units; alpha, beta and gamma. The alpha chain contains the guanine nucleotide binding site.

In terms of biological role, guanine nucleotide-binding proteins (G proteins) are involved as modulators or transducers in various transmembrane signaling systems. G alpha-3 plays a role in development. G alpha-3 mutants fail to aggregate. The polypeptide is Guanine nucleotide-binding protein alpha-3 subunit (gpaC) (Dictyostelium discoideum (Social amoeba)).